Here is a 199-residue protein sequence, read N- to C-terminus: Large ribosomal subunit protein uL13A (199 aa).

An N-acetylserine modification is found at S2. A Glycyl lysine isopeptide (Lys-Gly) (interchain with G-Cter in ubiquitin) cross-link involves residue K177.

The protein belongs to the universal ribosomal protein uL13 family. In terms of assembly, component of the large ribosomal subunit (LSU). Mature yeast ribosomes consist of a small (40S) and a large (60S) subunit. The 40S small subunit contains 1 molecule of ribosomal RNA (18S rRNA) and 33 different proteins (encoded by 57 genes). The large 60S subunit contains 3 rRNA molecules (25S, 5.8S and 5S rRNA) and 46 different proteins (encoded by 81 genes). In terms of processing, N-terminally acetylated by acetyltransferase NatA.

It is found in the cytoplasm. Component of the ribosome, a large ribonucleoprotein complex responsible for the synthesis of proteins in the cell. The small ribosomal subunit (SSU) binds messenger RNAs (mRNAs) and translates the encoded message by selecting cognate aminoacyl-transfer RNA (tRNA) molecules. The large subunit (LSU) contains the ribosomal catalytic site termed the peptidyl transferase center (PTC), which catalyzes the formation of peptide bonds, thereby polymerizing the amino acids delivered by tRNAs into a polypeptide chain. The nascent polypeptides leave the ribosome through a tunnel in the LSU and interact with protein factors that function in enzymatic processing, targeting, and the membrane insertion of nascent chains at the exit of the ribosomal tunnel. This Saccharomyces cerevisiae (strain ATCC 204508 / S288c) (Baker's yeast) protein is Large ribosomal subunit protein uL13A.